The chain runs to 312 residues: Ornithine carbamoyltransferase (312 aa).

Carbamoyl phosphate is bound by residues 57–60, glutamine 84, arginine 108, and 135–138; these read STRT and HPCQ. Residues asparagine 166, aspartate 226, and 230 to 231 contribute to the L-ornithine site; that span reads SM. Carbamoyl phosphate contacts are provided by residues 265–266 and arginine 293; that span reads CL.

The protein belongs to the aspartate/ornithine carbamoyltransferase superfamily. OTCase family.

It is found in the cytoplasm. The catalysed reaction is carbamoyl phosphate + L-ornithine = L-citrulline + phosphate + H(+). It participates in amino-acid biosynthesis; L-arginine biosynthesis; L-arginine from L-ornithine and carbamoyl phosphate: step 1/3. Reversibly catalyzes the transfer of the carbamoyl group from carbamoyl phosphate (CP) to the N(epsilon) atom of ornithine (ORN) to produce L-citrulline. The protein is Ornithine carbamoyltransferase of Brucella ovis (strain ATCC 25840 / 63/290 / NCTC 10512).